We begin with the raw amino-acid sequence, 375 residues long: Aminomethyltransferase (375 aa).

Belongs to the GcvT family. The glycine cleavage system is composed of four proteins: P, T, L and H.

It carries out the reaction N(6)-[(R)-S(8)-aminomethyldihydrolipoyl]-L-lysyl-[protein] + (6S)-5,6,7,8-tetrahydrofolate = N(6)-[(R)-dihydrolipoyl]-L-lysyl-[protein] + (6R)-5,10-methylene-5,6,7,8-tetrahydrofolate + NH4(+). In terms of biological role, the glycine cleavage system catalyzes the degradation of glycine. This is Aminomethyltransferase from Cupriavidus pinatubonensis (strain JMP 134 / LMG 1197) (Cupriavidus necator (strain JMP 134)).